A 451-amino-acid chain; its full sequence is UDP-N-acetylmuramoylalanine--D-glutamate ligase (451 aa).

Position 118–124 (118–124) interacts with ATP; the sequence is GSNGKTT.

This sequence belongs to the MurCDEF family.

It localises to the cytoplasm. It catalyses the reaction UDP-N-acetyl-alpha-D-muramoyl-L-alanine + D-glutamate + ATP = UDP-N-acetyl-alpha-D-muramoyl-L-alanyl-D-glutamate + ADP + phosphate + H(+). It functions in the pathway cell wall biogenesis; peptidoglycan biosynthesis. Functionally, cell wall formation. Catalyzes the addition of glutamate to the nucleotide precursor UDP-N-acetylmuramoyl-L-alanine (UMA). The protein is UDP-N-acetylmuramoylalanine--D-glutamate ligase of Shouchella clausii (strain KSM-K16) (Alkalihalobacillus clausii).